The primary structure comprises 29 residues: 28 kDa protein (29 aa).

This chain is 28 kDa protein, found in Tritrichomonas foetus (Trichomonas foetus).